The primary structure comprises 308 residues: Elongation factor Ts (308 aa).

Residues 79-82 (TDFV) form an involved in Mg(2+) ion dislocation from EF-Tu region.

It belongs to the EF-Ts family.

It localises to the cytoplasm. Associates with the EF-Tu.GDP complex and induces the exchange of GDP to GTP. It remains bound to the aminoacyl-tRNA.EF-Tu.GTP complex up to the GTP hydrolysis stage on the ribosome. This is Elongation factor Ts from Bdellovibrio bacteriovorus (strain ATCC 15356 / DSM 50701 / NCIMB 9529 / HD100).